The sequence spans 254 residues: Thiazole synthase (254 aa).

Lys96 serves as the catalytic Schiff-base intermediate with DXP. 1-deoxy-D-xylulose 5-phosphate is bound by residues Gly157, 183 to 184, and 205 to 206; these read AG and NT.

The protein belongs to the ThiG family. Homotetramer. Forms heterodimers with either ThiH or ThiS.

The protein localises to the cytoplasm. It carries out the reaction [ThiS sulfur-carrier protein]-C-terminal-Gly-aminoethanethioate + 2-iminoacetate + 1-deoxy-D-xylulose 5-phosphate = [ThiS sulfur-carrier protein]-C-terminal Gly-Gly + 2-[(2R,5Z)-2-carboxy-4-methylthiazol-5(2H)-ylidene]ethyl phosphate + 2 H2O + H(+). It participates in cofactor biosynthesis; thiamine diphosphate biosynthesis. Functionally, catalyzes the rearrangement of 1-deoxy-D-xylulose 5-phosphate (DXP) to produce the thiazole phosphate moiety of thiamine. Sulfur is provided by the thiocarboxylate moiety of the carrier protein ThiS. In vitro, sulfur can be provided by H(2)S. The polypeptide is Thiazole synthase (Clostridium perfringens (strain SM101 / Type A)).